The sequence spans 328 residues: D-cysteine desulfhydrase (328 aa).

Lys-51 is subject to N6-(pyridoxal phosphate)lysine.

It belongs to the ACC deaminase/D-cysteine desulfhydrase family. Homodimer. Pyridoxal 5'-phosphate serves as cofactor.

The catalysed reaction is D-cysteine + H2O = hydrogen sulfide + pyruvate + NH4(+) + H(+). Catalyzes the alpha,beta-elimination reaction of D-cysteine and of several D-cysteine derivatives. It could be a defense mechanism against D-cysteine. The polypeptide is D-cysteine desulfhydrase (Shigella sonnei (strain Ss046)).